Consider the following 106-residue polypeptide: MATFELYRRSTIGMCLTETLDEMVSSGTLSPELAIQVLVQFDKSMTEALENQVKSKVSIKGHLHTYRFCDNVWTFILTEASFKNEETTEQVGKVKIVACDSKLLSQ.

This sequence belongs to the TFIIA subunit 2 family. TFIIA is a heterodimer of the large unprocessed subunit 1 and a small subunit gamma. It was originally believed to be a heterotrimer of an alpha, a beta and a gamma subunit.

It localises to the nucleus. In terms of biological role, TFIIA is a component of the transcription machinery of RNA polymerase II and plays an important role in transcriptional activation. TFIIA in a complex with TBP mediates transcriptional activity. Protein involved in the resistance to X.oryzae. The polypeptide is Transcription initiation factor IIA subunit 2 (TFIIAy) (Oryza sativa subsp. indica (Rice)).